We begin with the raw amino-acid sequence, 1938 residues long: Myosin-6 (1938 aa).

The Myosin N-terminal SH3-like domain occupies 32–81 (DIRTECFVPDDKEEYVKAKVVSREGGKVTAETENGKTVTIKEDQVMQQNP). Positions 85 to 780 (DKIEDMAMLT…LLGLLEEMRD (696 aa)) constitute a Myosin motor domain. At K129 the chain carries N6,N6,N6-trimethyllysine. Position 178-185 (178-185 (GESGAGKT)) interacts with ATP. The residue at position 379 (T379) is a Phosphothreonine. At S417 the chain carries Phosphoserine. Actin-binding stretches follow at residues 657 to 679 (LNKL…IPNE) and 759 to 773 (KFGH…GLLG). An IQ domain is found at 783–812 (LSRIITRIQAQARGQLMRIEFKKIVERRDA). 2 calmodulin-binding regions span residues 790 to 807 (IQAQ…KKIV) and 816 to 833 (IQWN…PWMK). The stretch at 842-1938 (LKSAETEKEM…IGAKKMHDEE (1097 aa)) forms a coiled coil. S1090 and S1139 each carry phosphoserine. Y1261 is subject to Phosphotyrosine. S1271 is subject to Phosphoserine. Phosphothreonine is present on residues T1277 and T1284. S1309 is modified (phosphoserine). Y1310 is modified (phosphotyrosine). A Phosphothreonine modification is found at T1311. A Phosphoserine modification is found at S1512. At T1515 the chain carries Phosphothreonine. Residues 1909–1938 (EERADIAESQVNKLRAKSRDIGAKKMHDEE) are disordered. Basic and acidic residues predominate over residues 1925–1938 (KSRDIGAKKMHDEE).

It belongs to the TRAFAC class myosin-kinesin ATPase superfamily. Myosin family. Muscle myosin is a hexameric protein that consists of 2 heavy chain subunits (MHC), 2 alkali light chain subunits (MLC) and 2 regulatory light chain subunits (MLC-2).

The protein resides in the cytoplasm. Its subcellular location is the myofibril. Muscle contraction. The protein is Myosin-6 (Myh6) of Mus musculus (Mouse).